The chain runs to 224 residues: Myogenin (224 aa).

Phosphoserine; by CaMK2G occurs at positions 77 and 79. A bHLH domain is found at 81 to 132 (DRRRAATLREKRRLKKVNEAFEALKRSTLLNPNQRLPKVEILRSAIQYIERL). Thr87 carries the phosphothreonine; by CaMK2G modification.

As to quaternary structure, homodimer and heterodimer with E12; heterodimerization enhances MYOG DNA-binding and transcriptional activities. Interacts with SMARCA4/BRG1/BAF190A. Interacts (via C-terminal region) with SSRP1 and SUPT16H; the interaction is indicative of an interaction with the FACT complex. Interacts with CSRP3. In terms of processing, phosphorylated by CAMK2G on threonine and serine amino acids in a muscle activity-dependent manner. Phosphorylation of Thr-87 impairs both DNA-binding and trans-activation functions in contracting muscles.

The protein localises to the nucleus. Acts as a transcriptional activator that promotes transcription of muscle-specific target genes and plays a role in muscle differentiation, cell cycle exit and muscle atrophy. Essential for the development of functional embryonic skeletal fiber muscle differentiation. However is dispensable for postnatal skeletal muscle growth; phosphorylation by CAMK2G inhibits its transcriptional activity in respons to muscle activity. Required for the recruitment of the FACT complex to muscle-specific promoter regions, thus promoting gene expression initiation. During terminal myoblast differentiation, plays a role as a strong activator of transcription at loci with an open chromatin structure previously initiated by MYOD1. Together with MYF5 and MYOD1, co-occupies muscle-specific gene promoter core regions during myogenesis. Also cooperates with myocyte-specific enhancer factor MEF2D and BRG1-dependent recruitment of SWI/SNF chromatin-remodeling enzymes to alter chromatin structure at myogenic late gene promoters. Facilitates cell cycle exit during terminal muscle differentiation through the up-regulation of miR-20a expression, which in turn represses genes involved in cell cycle progression. Binds to the E-box containing (E1) promoter region of the miR-20a gene. Also plays a role in preventing reversal of muscle cell differentiation. Contributes to the atrophy-related gene expression in adult denervated muscles. Induces fibroblasts to differentiate into myoblasts. The sequence is that of Myogenin (MYOG) from Homo sapiens (Human).